A 129-amino-acid chain; its full sequence is Ribosome-binding factor A (129 aa).

Belongs to the RbfA family. Monomer. Binds 30S ribosomal subunits, but not 50S ribosomal subunits or 70S ribosomes.

Its subcellular location is the cytoplasm. One of several proteins that assist in the late maturation steps of the functional core of the 30S ribosomal subunit. Associates with free 30S ribosomal subunits (but not with 30S subunits that are part of 70S ribosomes or polysomes). Required for efficient processing of 16S rRNA. May interact with the 5'-terminal helix region of 16S rRNA. The polypeptide is Ribosome-binding factor A (Desulfosudis oleivorans (strain DSM 6200 / JCM 39069 / Hxd3) (Desulfococcus oleovorans)).